The chain runs to 120 residues: Cell cycle protein GpsB (120 aa).

The stretch at 34–74 (LDDVIKDYDTYNKELERLNDENERLRAKVDELNRQVEVGSS) forms a coiled coil. Residues 69 to 90 (VEVGSSMSNQTASRQPVSSATN) form a disordered region. The segment covering 71–90 (VGSSMSNQTASRQPVSSATN) has biased composition (polar residues).

Belongs to the GpsB family. Forms polymers through the coiled coil domains. Interacts with PBP1, MreC and EzrA.

The protein resides in the cytoplasm. Functionally, divisome component that associates with the complex late in its assembly, after the Z-ring is formed, and is dependent on DivIC and PBP2B for its recruitment to the divisome. Together with EzrA, is a key component of the system that regulates PBP1 localization during cell cycle progression. Its main role could be the removal of PBP1 from the cell pole after pole maturation is completed. Also contributes to the recruitment of PBP1 to the division complex. Not essential for septum formation. The protein is Cell cycle protein GpsB of Limosilactobacillus reuteri (strain DSM 20016) (Lactobacillus reuteri).